Consider the following 311-residue polypeptide: Aspartate carbamoyltransferase catalytic subunit (311 aa).

Carbamoyl phosphate contacts are provided by R55 and T56. An L-aspartate-binding site is contributed by K85. Positions 106, 134, and 137 each coordinate carbamoyl phosphate. 2 residues coordinate L-aspartate: R167 and R228. L266 and P267 together coordinate carbamoyl phosphate.

It belongs to the aspartate/ornithine carbamoyltransferase superfamily. ATCase family. Heterododecamer (2C3:3R2) of six catalytic PyrB chains organized as two trimers (C3), and six regulatory PyrI chains organized as three dimers (R2).

It catalyses the reaction carbamoyl phosphate + L-aspartate = N-carbamoyl-L-aspartate + phosphate + H(+). It participates in pyrimidine metabolism; UMP biosynthesis via de novo pathway; (S)-dihydroorotate from bicarbonate: step 2/3. In terms of biological role, catalyzes the condensation of carbamoyl phosphate and aspartate to form carbamoyl aspartate and inorganic phosphate, the committed step in the de novo pyrimidine nucleotide biosynthesis pathway. This is Aspartate carbamoyltransferase catalytic subunit from Psychromonas ingrahamii (strain DSM 17664 / CCUG 51855 / 37).